We begin with the raw amino-acid sequence, 1458 residues long: RNA-directed RNA polymerase P1 (1458 aa).

The segment at 148–168 (LSQDDRDEKGNDNREEEDVKN) is disordered. A RdRp catalytic domain is found at 686–894 (VGIGFATIYQ…KTVISHISGE (209 aa)). Residues 971–993 (DESIENKPNRRGSKAKARSTKTN) form a disordered region. Over residues 979–989 (NRRGSKAKARS) the composition is skewed to basic residues.

This sequence belongs to the reoviridae RNA-directed RNA polymerase family.

Its subcellular location is the virion. The protein resides in the host cytoplasm. The catalysed reaction is RNA(n) + a ribonucleoside 5'-triphosphate = RNA(n+1) + diphosphate. Functionally, RNA-directed RNA polymerase that is involved in both transcription and genome replication. Together with the capping enzyme P5 and protein P7, forms an enzyme complex positioned near the channels situated at each of the five-fold vertices of the core. This chain is RNA-directed RNA polymerase P1, found in Nephotettix cincticeps (Green rice leafhopper).